The chain runs to 88 residues: UPF0367 protein syc2447_c (88 aa).

It belongs to the UPF0367 family.

In Synechococcus sp. (strain ATCC 27144 / PCC 6301 / SAUG 1402/1) (Anacystis nidulans), this protein is UPF0367 protein syc2447_c.